We begin with the raw amino-acid sequence, 115 residues long: Cyclin-dependent protein kinase inhibitor SMR3 (115 aa).

Residues 17 to 36 (KIRLPTRPELDIPDSDHEDP) show a composition bias toward basic and acidic residues. The disordered stretch occupies residues 17-82 (KIRLPTRPEL…RSSGTKRKLT (66 aa)). The span at 67-81 (RKPKPNRSSGTKRKL) shows a compositional bias: basic residues.

Interacts with CDKA-1 and D-type cyclins. As to expression, expressed at low levels in roots and stems.

It localises to the nucleus. Functionally, probable cyclin-dependent protein kinase (CDK) inhibitor that functions as a repressor of mitosis in the endoreduplication cell cycle. The chain is Cyclin-dependent protein kinase inhibitor SMR3 from Arabidopsis thaliana (Mouse-ear cress).